Here is a 498-residue protein sequence, read N- to C-terminus: Glycerol kinase (498 aa).

Residue Thr12 participates in ADP binding. ATP is bound by residues Thr12, Thr13, and Ser14. Thr12 lines the sn-glycerol 3-phosphate pocket. Arg16 serves as a coordination point for ADP. Arg82, Glu83, Tyr134, and Asp243 together coordinate sn-glycerol 3-phosphate. 5 residues coordinate glycerol: Arg82, Glu83, Tyr134, Asp243, and Gln244. Residues Thr265 and Gly308 each coordinate ADP. ATP contacts are provided by Thr265, Gly308, Gln312, and Gly411. Gly411 contacts ADP.

This sequence belongs to the FGGY kinase family.

The enzyme catalyses glycerol + ATP = sn-glycerol 3-phosphate + ADP + H(+). It participates in polyol metabolism; glycerol degradation via glycerol kinase pathway; sn-glycerol 3-phosphate from glycerol: step 1/1. With respect to regulation, inhibited by fructose 1,6-bisphosphate (FBP). Key enzyme in the regulation of glycerol uptake and metabolism. Catalyzes the phosphorylation of glycerol to yield sn-glycerol 3-phosphate. The sequence is that of Glycerol kinase from Brucella suis biovar 1 (strain 1330).